Here is a 70-residue protein sequence, read N- to C-terminus: Large ribosomal subunit protein bL31 (70 aa).

Cys-16, Cys-18, Cys-37, and Cys-40 together coordinate Zn(2+).

This sequence belongs to the bacterial ribosomal protein bL31 family. Type A subfamily. As to quaternary structure, part of the 50S ribosomal subunit. Zn(2+) serves as cofactor.

Binds the 23S rRNA. This chain is Large ribosomal subunit protein bL31, found in Klebsiella pneumoniae (strain 342).